A 156-amino-acid chain; its full sequence is ATP synthase subunit b (156 aa).

Residues 7–27 (IFFQMLVFFVLGWFTMKFVWP) form a helical membrane-spanning segment.

The protein belongs to the ATPase B chain family. As to quaternary structure, F-type ATPases have 2 components, F(1) - the catalytic core - and F(0) - the membrane proton channel. F(1) has five subunits: alpha(3), beta(3), gamma(1), delta(1), epsilon(1). F(0) has three main subunits: a(1), b(2) and c(10-14). The alpha and beta chains form an alternating ring which encloses part of the gamma chain. F(1) is attached to F(0) by a central stalk formed by the gamma and epsilon chains, while a peripheral stalk is formed by the delta and b chains.

The protein resides in the cell inner membrane. Functionally, f(1)F(0) ATP synthase produces ATP from ADP in the presence of a proton or sodium gradient. F-type ATPases consist of two structural domains, F(1) containing the extramembraneous catalytic core and F(0) containing the membrane proton channel, linked together by a central stalk and a peripheral stalk. During catalysis, ATP synthesis in the catalytic domain of F(1) is coupled via a rotary mechanism of the central stalk subunits to proton translocation. Component of the F(0) channel, it forms part of the peripheral stalk, linking F(1) to F(0). In Bordetella pertussis (strain Tohama I / ATCC BAA-589 / NCTC 13251), this protein is ATP synthase subunit b.